The chain runs to 215 residues: Large ribosomal subunit protein uL4c (215 aa).

Positions S48 to K57 are enriched in polar residues. The disordered stretch occupies residues S48 to S85. A compositionally biased stretch (basic residues) spans G65–G76.

The protein belongs to the universal ribosomal protein uL4 family. In terms of assembly, part of the 50S ribosomal subunit.

The protein localises to the plastid. It is found in the chloroplast. Probably binds the 23S rRNA. The sequence is that of Large ribosomal subunit protein uL4c (rpl4) from Trieres chinensis (Marine centric diatom).